The primary structure comprises 289 residues: Ribosome-inactivating protein alpha-trichosanthin (289 aa).

The first 23 residues, 1–23 (MIRFLVLSLLILTLFLTTPAVEG), serve as a signal peptide directing secretion. The active site involves Glu-183. Positions 271 to 289 (AMDDDVPMTQSFGCGSYAI) are cleaved as a propeptide — removed in mature form.

The protein belongs to the ribosome-inactivating protein family. Type 1 RIP subfamily.

The catalysed reaction is Endohydrolysis of the N-glycosidic bond at one specific adenosine on the 28S rRNA.. Its function is as follows. Inactivates eukaryotic 60S ribosomal subunits. The chain is Ribosome-inactivating protein alpha-trichosanthin from Trichosanthes kirilowii (Chinese snake gourd).